Reading from the N-terminus, the 175-residue chain is Large ribosomal subunit protein uL18 (175 aa).

It belongs to the universal ribosomal protein uL18 family. Part of the 50S ribosomal subunit. Contacts the 5S and 23S rRNAs.

Its function is as follows. This is one of the proteins that bind and probably mediate the attachment of the 5S RNA into the large ribosomal subunit, where it forms part of the central protuberance. This is Large ribosomal subunit protein uL18 from Methanospirillum hungatei JF-1 (strain ATCC 27890 / DSM 864 / NBRC 100397 / JF-1).